The chain runs to 219 residues: Small ribosomal subunit protein uS5 (219 aa).

Residues 1–21 are compositionally biased toward polar residues; it reads MTDQNQKANQGNGLQTTNLQA. Positions 1–61 are disordered; that stretch reads MTDQNQKANQ…NQNRRFQKPA (61 aa). Over residues 35-47 the composition is skewed to basic and acidic residues; sequence GIKKAVSKKEGGG. Positions 66–129 constitute an S5 DRBM domain; the sequence is FEERIVKLKR…KAAHNSLHTI (64 aa).

It belongs to the universal ribosomal protein uS5 family. In terms of assembly, part of the 30S ribosomal subunit. Contacts proteins S4 and S8.

In terms of biological role, with S4 and S12 plays an important role in translational accuracy. Functionally, located at the back of the 30S subunit body where it stabilizes the conformation of the head with respect to the body. This Mycoplasma pneumoniae (strain ATCC 29342 / M129 / Subtype 1) (Mycoplasmoides pneumoniae) protein is Small ribosomal subunit protein uS5.